The sequence spans 152 residues: uncharacterized protein (152 aa).

The helical transmembrane segment at 7–27 (TLSVIVFLISLIIIFGIYFSS) threads the bilayer.

The protein localises to the membrane. This is an uncharacterized protein from Methanocaldococcus jannaschii (strain ATCC 43067 / DSM 2661 / JAL-1 / JCM 10045 / NBRC 100440) (Methanococcus jannaschii).